Here is a 314-residue protein sequence, read N- to C-terminus: Methionyl-tRNA formyltransferase (314 aa).

110-113 (SLLP) lines the (6S)-5,6,7,8-tetrahydrofolate pocket.

The protein belongs to the Fmt family.

It carries out the reaction L-methionyl-tRNA(fMet) + (6R)-10-formyltetrahydrofolate = N-formyl-L-methionyl-tRNA(fMet) + (6S)-5,6,7,8-tetrahydrofolate + H(+). In terms of biological role, attaches a formyl group to the free amino group of methionyl-tRNA(fMet). The formyl group appears to play a dual role in the initiator identity of N-formylmethionyl-tRNA by promoting its recognition by IF2 and preventing the misappropriation of this tRNA by the elongation apparatus. The sequence is that of Methionyl-tRNA formyltransferase from Lactobacillus gasseri (strain ATCC 33323 / DSM 20243 / BCRC 14619 / CIP 102991 / JCM 1131 / KCTC 3163 / NCIMB 11718 / NCTC 13722 / AM63).